The primary structure comprises 161 residues: uncharacterized protein (161 aa).

A helical membrane pass occupies residues 30-50 (GVILFRLLGVILFRLLGVILF).

It is found in the membrane. This is an uncharacterized protein from Homo sapiens (Human).